The chain runs to 67 residues: Conotoxin reg3.8 (67 aa).

An N-terminal signal peptide occupies residues Met1–Pro22. Residues Leu23–Arg50 constitute a propeptide that is removed on maturation. Disulfide bonds link Cys51–Cys65, Cys52–Cys63, and Cys57–Cys66. Cys66 carries the post-translational modification Cysteine amide.

Belongs to the conotoxin M superfamily. Expressed by the venom duct.

The protein localises to the secreted. The sequence is that of Conotoxin reg3.8 from Conus regius (Crown cone).